Here is a 99-residue protein sequence, read N- to C-terminus: Endothelin receptor type B (99 aa).

The Extracellular segment spans residues 1-8 (PFGAEMCK). The cysteines at positions 7 and 88 are disulfide-linked. The chain crosses the membrane as a helical span at residues 9–30 (LVPFIQKASVGITVLSLCALSI). Residues 31-51 (DRYRAVASWSRIKGIGIPKWT) lie on the Cytoplasmic side of the membrane. Residues 52-76 (AVEIVLIWVVSVVLAVPEAIGFDMI) form a helical membrane-spanning segment. At 77–99 (TMDYKGSYLRICLLHPVQKTAFM) the chain is on the extracellular side.

This sequence belongs to the G-protein coupled receptor 1 family. Endothelin receptor subfamily. EDNRB sub-subfamily.

It is found in the cell membrane. In terms of biological role, non-specific receptor for endothelin 1, 2, and 3. Mediates its action by association with G proteins that activate a phosphatidylinositol-calcium second messenger system. This is Endothelin receptor type B (EDNRB) from Macaca fascicularis (Crab-eating macaque).